The primary structure comprises 450 residues: MKTWPAPTAPTPVRATVTVPGSKSQTNRALVLAALAAAQGRGASTISGALRSRDTELMLDALQTLGLRVDGVGSELTVSGRIEPGPGARVDCGLAGTVLRFVPPLAALGSVPVTFDGDQQARGRPIAPLLDALRELGVAVDGTGLPFRVHGNGSLAGGTVAIDASASSQFVSGLLLSAASFTDGLTVQHTGSSLPSAPHIAMTAAMLRQAGVDIDDSTPNRWQVRPGPVAARRWDIEPDLTNAVAFLSAAVVSGGTVRITGWPRVSVQPADHILAILRQLNAVVIHADSSLEVRGPTGYDGFDVDLRAVGELTPSVAALAALASPGSVSRLSGIAHLRGHETDRLAALSTEINRLGGTCRETPDGLVITATPLRPGIWRAYADHRMAMAGAIIGLRVAGVEVDDIAATTKTLPEFPRLWAEMVGPGQGWGYPQPRSGQRARRATGQGSGG.

3-phosphoshikimate is bound by residues Lys23, Ser24, and Arg28. Lys23 contacts phosphoenolpyruvate. Residues Gly96 and Arg124 each coordinate phosphoenolpyruvate. 3-phosphoshikimate contacts are provided by Ser167, Ser168, Gln169, Ser196, Glu311, and His340. Gln169 serves as a coordination point for phosphoenolpyruvate. Glu311 functions as the Proton acceptor in the catalytic mechanism. Residues Arg344, Arg385, and Lys410 each coordinate phosphoenolpyruvate. Residues 426–450 (GQGWGYPQPRSGQRARRATGQGSGG) are disordered.

Belongs to the EPSP synthase family. In terms of assembly, monomer.

Its subcellular location is the cytoplasm. It catalyses the reaction 3-phosphoshikimate + phosphoenolpyruvate = 5-O-(1-carboxyvinyl)-3-phosphoshikimate + phosphate. The protein operates within metabolic intermediate biosynthesis; chorismate biosynthesis; chorismate from D-erythrose 4-phosphate and phosphoenolpyruvate: step 6/7. Functionally, catalyzes the transfer of the enolpyruvyl moiety of phosphoenolpyruvate (PEP) to the 5-hydroxyl of shikimate-3-phosphate (S3P) to produce enolpyruvyl shikimate-3-phosphate and inorganic phosphate. In Mycobacterium bovis (strain ATCC BAA-935 / AF2122/97), this protein is 3-phosphoshikimate 1-carboxyvinyltransferase.